Here is a 472-residue protein sequence, read N- to C-terminus: Na(+)/H(+) antiporter NhaA (472 aa).

11 helical membrane-spanning segments follow: residues A48–W68, M91–L111, A129–V149, A157–L177, L185–A205, H210–L230, H237–V257, G337–F357, V374–V394, L410–L430, and L443–G463.

Belongs to the NhaA Na(+)/H(+) (TC 2.A.33) antiporter family.

It is found in the cell inner membrane. The catalysed reaction is Na(+)(in) + 2 H(+)(out) = Na(+)(out) + 2 H(+)(in). Functionally, na(+)/H(+) antiporter that extrudes sodium in exchange for external protons. The sequence is that of Na(+)/H(+) antiporter NhaA from Syntrophobacter fumaroxidans (strain DSM 10017 / MPOB).